A 352-amino-acid polypeptide reads, in one-letter code: MQSKRECEQWCERVNPENKAALEAWVRETGIRLVQVNGQRKYGGPPPGWVGSPPPSGSEVYIGRLPQDVYEHQLIPLFQRVGRLYEFRLMMTFSGLNRGFAYARYSSRRGAQAAIATLHNHQLRPSCQLLVCRSTEKCELTVDGLPLSLNRRALLLALQPFGPCLQETLLLPSPGSAPSQIALLKFSTHRAAAMAKKALVEGQSRLCGEQVAVEWLKPDLKQHFRQQLAGPSLRFLRPDVSQLTQTREKLGSQGARAALQLLCQRMKLGSPVFLTKCLGTGPAGWHRFWYQVVIPGHPVPFSGLIWVVLASDWQDGHEVAKDAVSAQLLEALSEPRTSLWSPGAEAGTMVKQ.

RRM domains are found at residues 58–136 (SEVY…RSTE) and 138–218 (CELT…WLKP). Omega-N-methylarginine is present on R336.

Interacts with APOBEC3. Isoform 1 and isoform 2 are expressed in testis. Isoform 1 is expressed continuously in post natal (PN) testis although levels are low between PN1 to PN6. Isoform 2 is expressed from PN 20 onwards. Isoform 2 is strongly expressed in meiotic and in post-meiotic germ cells of the testis with highest expression at the elongated spermatid stage (at protein level). Expressed in testis and heart. Expressed in germ cells and genital ridges. Not detected in testicular tumors.

The protein resides in the nucleus. It localises to the cytoplasm. RNA-binding factor that positively regulates gene expression by prohibiting miRNA-mediated gene suppression. Relieves miRNA repression in germline cells. Prohibits the function of several miRNAs by blocking the accessibility of target mRNAs. Sequence-specific RNA-binding factor that binds specifically to U-rich regions (URRs) in the 3' untranslated region (3'-UTR) of several mRNAs. Does not bind to miRNAs. Isoform 1 may play a role during primordial germ cell (PGC) survival. However, does not seem to be essential for PGC migration. The sequence is that of Dead end protein homolog 1 (Dnd1) from Mus musculus (Mouse).